The primary structure comprises 131 residues: Small ribosomal subunit protein uS11 (131 aa).

It belongs to the universal ribosomal protein uS11 family. In terms of assembly, part of the 30S ribosomal subunit. Interacts with proteins S7 and S18. Binds to IF-3.

Functionally, located on the platform of the 30S subunit, it bridges several disparate RNA helices of the 16S rRNA. Forms part of the Shine-Dalgarno cleft in the 70S ribosome. In Paramagnetospirillum magneticum (strain ATCC 700264 / AMB-1) (Magnetospirillum magneticum), this protein is Small ribosomal subunit protein uS11.